Reading from the N-terminus, the 410-residue chain is Imidazolonepropionase (410 aa).

Fe(3+)-binding residues include histidine 71 and histidine 73. Positions 71 and 73 each coordinate Zn(2+). Arginine 80, tyrosine 143, and histidine 175 together coordinate 4-imidazolone-5-propanoate. Tyrosine 143 is an N-formimidoyl-L-glutamate binding site. Position 235 (histidine 235) interacts with Fe(3+). Histidine 235 serves as a coordination point for Zn(2+). Glutamate 238 contacts 4-imidazolone-5-propanoate. Aspartate 309 contacts Fe(3+). Aspartate 309 serves as a coordination point for Zn(2+).

It belongs to the metallo-dependent hydrolases superfamily. HutI family. Requires Zn(2+) as cofactor. It depends on Fe(3+) as a cofactor.

The protein resides in the cytoplasm. It catalyses the reaction 4-imidazolone-5-propanoate + H2O = N-formimidoyl-L-glutamate. The protein operates within amino-acid degradation; L-histidine degradation into L-glutamate; N-formimidoyl-L-glutamate from L-histidine: step 3/3. Catalyzes the hydrolytic cleavage of the carbon-nitrogen bond in imidazolone-5-propanoate to yield N-formimidoyl-L-glutamate. It is the third step in the universal histidine degradation pathway. The protein is Imidazolonepropionase of Thermoplasma acidophilum (strain ATCC 25905 / DSM 1728 / JCM 9062 / NBRC 15155 / AMRC-C165).